A 208-amino-acid polypeptide reads, in one-letter code: Octanoyltransferase (208 aa).

A BPL/LPL catalytic domain is found at 30-208; sequence GTASEAVFIL…ILKQEFYKIF (179 aa). Substrate contacts are provided by residues 69–76, 142–144, and 155–157; these read RGGKFTYH, SIG, and GVA. The Acyl-thioester intermediate role is filled by cysteine 173.

The protein belongs to the LipB family.

It is found in the cytoplasm. The enzyme catalyses octanoyl-[ACP] + L-lysyl-[protein] = N(6)-octanoyl-L-lysyl-[protein] + holo-[ACP] + H(+). The protein operates within protein modification; protein lipoylation via endogenous pathway; protein N(6)-(lipoyl)lysine from octanoyl-[acyl-carrier-protein]: step 1/2. Catalyzes the transfer of endogenously produced octanoic acid from octanoyl-acyl-carrier-protein onto the lipoyl domains of lipoate-dependent enzymes. Lipoyl-ACP can also act as a substrate although octanoyl-ACP is likely to be the physiological substrate. This chain is Octanoyltransferase, found in Orientia tsutsugamushi (strain Ikeda) (Rickettsia tsutsugamushi).